The sequence spans 441 residues: MGKPVVAVVGRPNVGKSTFFNYLAGSRISIVEDTPGVTRDRIYTEIEWRNTKFTLIDTGGIEPYSEDIIMQQMKRQAEIAIETADVIIFMVDAKDGMTATDKEVATMLRKSQKPVVLCVNKVDRVGDPPPDVYEFYNLGMGEMQIISSVHGLGIGDLLDEVFEHFPEDIASEEEEDVIKVAVVGKPNAGKSSLINSILGENRVIVSNIPGTTRDAIDTHVEKDGQKYTFIDTAGIRRRSKISENIEKYSTIRSWTAVERADVCLIMIDAEDGVTEQDTKIAGYAHQQGKASIIVINKWDLIEKQTGTLEEYRKVVHEKLGFMTYAPVLFISAKTGQRVIKIYELIKFVADQAAFRISTGMLNDLVSEAVAMVQPPSDKGKRLKIYYMTQIGVKPPSFVVFVNDVELFHYSYERYLENQLRKNFGFEGTPIRFIHRQREKEN.

EngA-type G domains are found at residues 4–169 (PVVA…PEDI) and 178–353 (IKVA…DQAA). Residues 10 to 17 (GRPNVGKS), 57 to 61 (DTGGI), 120 to 123 (NKVD), 184 to 191 (GKPNAGKS), 231 to 235 (DTAGI), and 296 to 299 (NKWD) each bind GTP. The region spanning 354–438 (FRISTGMLND…PIRFIHRQRE (85 aa)) is the KH-like domain.

Belongs to the TRAFAC class TrmE-Era-EngA-EngB-Septin-like GTPase superfamily. EngA (Der) GTPase family. As to quaternary structure, associates with the 50S ribosomal subunit.

Functionally, GTPase that plays an essential role in the late steps of ribosome biogenesis. This Ruminiclostridium cellulolyticum (strain ATCC 35319 / DSM 5812 / JCM 6584 / H10) (Clostridium cellulolyticum) protein is GTPase Der.